The sequence spans 287 residues: 4-hydroxybenzoate octaprenyltransferase (287 aa).

Transmembrane regions (helical) follow at residues 19-39 (PIGS…AADG), 43-63 (LHVL…GCVI), 94-116 (LALA…PLVI), 135-155 (FFAI…PMGF), 160-180 (GEVP…AVAY), 207-227 (FDVA…GWVG), 234-254 (ALYF…YTLI), and 269-286 (NNWL…DYLI).

It belongs to the UbiA prenyltransferase family. Requires Mg(2+) as cofactor.

It localises to the cell inner membrane. The enzyme catalyses all-trans-octaprenyl diphosphate + 4-hydroxybenzoate = 4-hydroxy-3-(all-trans-octaprenyl)benzoate + diphosphate. It functions in the pathway cofactor biosynthesis; ubiquinone biosynthesis. In terms of biological role, catalyzes the prenylation of para-hydroxybenzoate (PHB) with an all-trans polyprenyl group. Mediates the second step in the final reaction sequence of ubiquinone-8 (UQ-8) biosynthesis, which is the condensation of the polyisoprenoid side chain with PHB, generating the first membrane-bound Q intermediate 3-octaprenyl-4-hydroxybenzoate. The protein is 4-hydroxybenzoate octaprenyltransferase of Azoarcus sp. (strain BH72).